Here is a 247-residue protein sequence, read N- to C-terminus: uncharacterized protein (247 aa).

Helical transmembrane passes span 9-29 (IIAI…FLIF) and 37-57 (SYFL…SLII).

It is found in the cell membrane. This is an uncharacterized protein from Methanocaldococcus jannaschii (strain ATCC 43067 / DSM 2661 / JAL-1 / JCM 10045 / NBRC 100440) (Methanococcus jannaschii).